Here is a 480-residue protein sequence, read N- to C-terminus: MKSSLRLNTGIILQIIGPVMDISFPSGKMPNIYNSLLIEGKTESGDRLKVVCEVQQLLGDNVVRAIAMSATDGLQRGIKVIDTGAPLSVPVGVTTLGRIFNVLGESVDKMGLIDYSITLPIHRAAPSFVELDTQLSIFETGIKVVDLLAPYRRGGKIGLFGGAGVGKTVLIMELINNIAKAHGGVSVFGGVGERTREGNDLYQEMKESGVINDRNFKESKVALIYGQMNEPPGARMRVGLTALTMAEYFRDVNKQDVLLFIDNIFRFVQAGSEVSALLGRMPSAVGYQPTLATEMGGLQERITSTKVGSITSIQAVYVPADDLTDPAPATTFAHLDATTVLSRNLASKGIYPAVDPLDSTSTMLQPWIVGEEHYNTAQSVKKTLQRYKELQDIIAILGLDELSEEDRLVVSRARKVERFLSQPFFVAEVFTGSPGKYVTLAETIEGFKAILSGDLDEVPEQAFYLVGNIEEVISKAIELQ.

An ATP-binding site is contributed by 161–168 (GGAGVGKT).

The protein belongs to the ATPase alpha/beta chains family. As to quaternary structure, F-type ATPases have 2 components, CF(1) - the catalytic core - and CF(0) - the membrane proton channel. CF(1) has five subunits: alpha(3), beta(3), gamma(1), delta(1), epsilon(1). CF(0) has four main subunits: a(1), b(1), b'(1) and c(9-12).

It is found in the plastid. It localises to the chloroplast thylakoid membrane. It carries out the reaction ATP + H2O + 4 H(+)(in) = ADP + phosphate + 5 H(+)(out). Functionally, produces ATP from ADP in the presence of a proton gradient across the membrane. The catalytic sites are hosted primarily by the beta subunits. This is ATP synthase subunit beta, chloroplastic from Euglena gracilis.